The following is a 319-amino-acid chain: uncharacterized protein (319 aa).

9 helical membrane passes run 11–31, 43–63, 83–103, 108–128, 134–154, 195–215, 220–240, 260–280, and 284–304; these read GLWA…LGVF, ALGW…GVWW, LSVD…IPAL, VLFW…FAGV, FHWL…KLFL, LATP…LFAL, AIFA…FAIL, KVGL…IDFV, and PEVS…ASLI.

The protein belongs to the TerC family.

It is found in the cell membrane. This is an uncharacterized protein from Myxococcus xanthus.